A 322-amino-acid polypeptide reads, in one-letter code: Ribosomal lysine N-methyltransferase 5 (322 aa).

Residues Trp92, 141–143, Asp163, Trp214, and Met242 each bind S-adenosyl-L-methionine; that span reads GTG.

Belongs to the class I-like SAM-binding methyltransferase superfamily. RKM5 family.

Functionally, S-adenosyl-L-methionine-dependent protein-lysine N-methyltransferase that methylates 60S ribosomal protein L1. This Kluyveromyces lactis (strain ATCC 8585 / CBS 2359 / DSM 70799 / NBRC 1267 / NRRL Y-1140 / WM37) (Yeast) protein is Ribosomal lysine N-methyltransferase 5 (RKM5).